Reading from the N-terminus, the 610-residue chain is Elongation factor 4 (610 aa).

Residues 11 to 193 (EKIRNFSIIA…QIVEKVPAPT (183 aa)) form the tr-type G domain. GTP contacts are provided by residues 23–28 (DHGKST) and 140–143 (NKID).

It belongs to the TRAFAC class translation factor GTPase superfamily. Classic translation factor GTPase family. LepA subfamily.

The protein resides in the cell membrane. The catalysed reaction is GTP + H2O = GDP + phosphate + H(+). Required for accurate and efficient protein synthesis under certain stress conditions. May act as a fidelity factor of the translation reaction, by catalyzing a one-codon backward translocation of tRNAs on improperly translocated ribosomes. Back-translocation proceeds from a post-translocation (POST) complex to a pre-translocation (PRE) complex, thus giving elongation factor G a second chance to translocate the tRNAs correctly. Binds to ribosomes in a GTP-dependent manner. The sequence is that of Elongation factor 4 from Streptococcus pyogenes serotype M12 (strain MGAS9429).